The chain runs to 318 residues: Ubiquitin-like domain-containing CTD phosphatase 1 (318 aa).

One can recognise a Ubiquitin-like domain in the interval 3 to 81 (LPIIVKWGGQ…IMMMGTREES (79 aa)). The residue at position 117 (Lys117) is an N6-acetyllysine. The region spanning 133–294 (PREGKKLLVL…VKLTQYLKEI (162 aa)) is the FCP1 homology domain. Residues Asp143, Asp145, and Asp253 each coordinate Mg(2+).

The cofactor is Mg(2+).

The protein resides in the nucleus. It catalyses the reaction O-phospho-L-seryl-[protein] + H2O = L-seryl-[protein] + phosphate. The catalysed reaction is O-phospho-L-threonyl-[protein] + H2O = L-threonyl-[protein] + phosphate. In terms of biological role, dephosphorylates 26S nuclear proteasomes, thereby decreasing their proteolytic activity. Recruited to the 19S regulatory particle of the 26S proteasome through its interaction with 19S component PSMD2/RPN1. Once recruited, dephosphorylates 19S component PSMC2/RPT1 which impairs PSMC2 ATPase activity and disrupts 26S proteasome assembly. Has also been reported to stimulate the proteolytic activity of the 26S proteasome. This is Ubiquitin-like domain-containing CTD phosphatase 1 (Ublcp1) from Rattus norvegicus (Rat).